The chain runs to 97 residues: Glutamyl-tRNA(Gln) amidotransferase subunit C (97 aa).

It belongs to the GatC family. Heterotrimer of A, B and C subunits.

It carries out the reaction L-glutamyl-tRNA(Gln) + L-glutamine + ATP + H2O = L-glutaminyl-tRNA(Gln) + L-glutamate + ADP + phosphate + H(+). It catalyses the reaction L-aspartyl-tRNA(Asn) + L-glutamine + ATP + H2O = L-asparaginyl-tRNA(Asn) + L-glutamate + ADP + phosphate + 2 H(+). Its function is as follows. Allows the formation of correctly charged Asn-tRNA(Asn) or Gln-tRNA(Gln) through the transamidation of misacylated Asp-tRNA(Asn) or Glu-tRNA(Gln) in organisms which lack either or both of asparaginyl-tRNA or glutaminyl-tRNA synthetases. The reaction takes place in the presence of glutamine and ATP through an activated phospho-Asp-tRNA(Asn) or phospho-Glu-tRNA(Gln). This chain is Glutamyl-tRNA(Gln) amidotransferase subunit C, found in Saccharolobus solfataricus (strain ATCC 35092 / DSM 1617 / JCM 11322 / P2) (Sulfolobus solfataricus).